The primary structure comprises 57 residues: U17-myrmicitoxin-Tb1a (57 aa).

The signal sequence occupies residues 1 to 29 (MEKNRTNIFSVYLMITFLLISIFITMVMS). The propeptide occupies 30–33 (DGEA). Cysteine 42 and cysteine 53 are oxidised to a cystine. Alanine 56 bears the Alanine amide mark.

In terms of processing, O-glycosylated. Expressed by the venom gland.

It is found in the secreted. Functionally, serine protease inhibitor which exhibits antifibrinolytic, antielastolytic and antimicrobial activities. Displays antimicrobial activity against bacteria and fungi. Likely functions in the innate immune response to microbial infection and possibly in the venom, as an antifibrinolytic agent. This is U17-myrmicitoxin-Tb1a from Tetramorium bicarinatum (Tramp ant).